Consider the following 414-residue polypeptide: Collagenase (414 aa).

Belongs to the peptidase U32 family. As to quaternary structure, homodimer. It depends on a metal cation as a cofactor.

Its function is as follows. Has collagenase activity. Hydrolyzes type I collagen. May play a role in virulence. In Porphyromonas gingivalis (strain ATCC BAA-308 / W83), this protein is Collagenase (prtC).